Reading from the N-terminus, the 427-residue chain is MSVSFEAKETNRGVLTFTIGQDAIKPELDRVFNKVKKDINLPGFRKGHLPRAVFNQKFGEEALYQDVVNALLPAAYEAAVAEAGLEVVAQPKIDVVSMEKGQDWTITAEVVTKPEVKLGDYKNLAVSVEATKEVTDEEVDAKIEAARNNLAELVIKEGPATEGDTVVIDFVGSIDGVEFDGGKGENFSLGLGSGQFIPGFEAQLVGHAAGEEVNVEVTFPEDYQAADLAGKQALFVTKIHEVKAKEVPALDDELAKDIDEEVETLDELKAKYRKELEASKEVAFDDAVESAALELAVENAEIVELPEEMIHEEVHRAINEFLGGMQQQGISPDMYFQITGTTREDLHKQYEADAEKRTKTNLVVEAVAKAEGFEATEEEINKEIEDLAATYNMEVAQVRSLLSPEMLKHDIAVKKAVEVITSTATVK.

Residues 163-248 enclose the PPIase FKBP-type domain; the sequence is GDTVVIDFVG…IHEVKAKEVP (86 aa).

This sequence belongs to the FKBP-type PPIase family. Tig subfamily.

It localises to the cytoplasm. It catalyses the reaction [protein]-peptidylproline (omega=180) = [protein]-peptidylproline (omega=0). In terms of biological role, involved in protein export. Acts as a chaperone by maintaining the newly synthesized protein in an open conformation. Functions as a peptidyl-prolyl cis-trans isomerase. The sequence is that of Trigger factor from Streptococcus suis (strain 98HAH33).